A 369-amino-acid polypeptide reads, in one-letter code: S-(hydroxymethyl)glutathione dehydrogenase (369 aa).

Positions 40, 62, 92, 95, 98, 106, and 169 each coordinate Zn(2+).

It belongs to the zinc-containing alcohol dehydrogenase family. Class-III subfamily. In terms of assembly, homodimer. The cofactor is Zn(2+).

Its subcellular location is the cytoplasm. The catalysed reaction is S-(hydroxymethyl)glutathione + NADP(+) = S-formylglutathione + NADPH + H(+). It carries out the reaction S-(hydroxymethyl)glutathione + NAD(+) = S-formylglutathione + NADH + H(+). It catalyses the reaction a primary alcohol + NAD(+) = an aldehyde + NADH + H(+). The enzyme catalyses a secondary alcohol + NAD(+) = a ketone + NADH + H(+). The catalysed reaction is S-nitrosoglutathione + NADH + H(+) = S-(hydroxysulfenamide)glutathione + NAD(+). Has high formaldehyde dehydrogenase activity in the presence of glutathione and catalyzes the oxidation of normal alcohols in a reaction that is not GSH-dependent. In addition, hemithiolacetals other than those formed from GSH, including omega-thiol fatty acids, also are substrates. Also acts as a S-nitroso-glutathione reductase by catalyzing the NADH-dependent reduction of S-nitrosoglutathione. The protein is S-(hydroxymethyl)glutathione dehydrogenase (frmA) of Escherichia coli O1:K1 / APEC.